A 223-amino-acid polypeptide reads, in one-letter code: Thiamine-phosphate synthase (223 aa).

Residues 37-41 (QFREK) and D72 contribute to the 4-amino-2-methyl-5-(diphosphooxymethyl)pyrimidine site. Residues D73 and D92 each coordinate Mg(2+). S110 serves as a coordination point for 4-amino-2-methyl-5-(diphosphooxymethyl)pyrimidine. Position 136 to 138 (136 to 138 (TQS)) interacts with 2-[(2R,5Z)-2-carboxy-4-methylthiazol-5(2H)-ylidene]ethyl phosphate. K139 contacts 4-amino-2-methyl-5-(diphosphooxymethyl)pyrimidine. 2-[(2R,5Z)-2-carboxy-4-methylthiazol-5(2H)-ylidene]ethyl phosphate is bound by residues G168 and 188 to 189 (IS).

It belongs to the thiamine-phosphate synthase family. It depends on Mg(2+) as a cofactor.

The enzyme catalyses 2-[(2R,5Z)-2-carboxy-4-methylthiazol-5(2H)-ylidene]ethyl phosphate + 4-amino-2-methyl-5-(diphosphooxymethyl)pyrimidine + 2 H(+) = thiamine phosphate + CO2 + diphosphate. It catalyses the reaction 2-(2-carboxy-4-methylthiazol-5-yl)ethyl phosphate + 4-amino-2-methyl-5-(diphosphooxymethyl)pyrimidine + 2 H(+) = thiamine phosphate + CO2 + diphosphate. The catalysed reaction is 4-methyl-5-(2-phosphooxyethyl)-thiazole + 4-amino-2-methyl-5-(diphosphooxymethyl)pyrimidine + H(+) = thiamine phosphate + diphosphate. It participates in cofactor biosynthesis; thiamine diphosphate biosynthesis; thiamine phosphate from 4-amino-2-methyl-5-diphosphomethylpyrimidine and 4-methyl-5-(2-phosphoethyl)-thiazole: step 1/1. Its function is as follows. Condenses 4-methyl-5-(beta-hydroxyethyl)thiazole monophosphate (THZ-P) and 2-methyl-4-amino-5-hydroxymethyl pyrimidine pyrophosphate (HMP-PP) to form thiamine monophosphate (TMP). The chain is Thiamine-phosphate synthase from Streptococcus agalactiae serotype III (strain NEM316).